The sequence spans 569 residues: Probable ABC transporter permease protein y4fN (569 aa).

13 consecutive transmembrane segments (helical) span residues 10-30 (VFYW…LLVP), 68-88 (VWMT…QVAV), 98-118 (GFLK…AAAG), 121-141 (FTYG…PSLP), 145-165 (FIGW…FHFL), 196-216 (VVLP…LITA), 247-267 (PDMA…LILL), 304-324 (LAYL…LFSF), 363-383 (MSSI…PIMV), 395-415 (ICFV…LIVA), 426-446 (LVLL…SLPL), 480-500 (VVLP…FNNL), and 534-554 (AAVS…VILI). In terms of domain architecture, ABC transmembrane type-1 1 spans 64 to 268 (LWNTVWMTAA…LVLMGLILLS (205 aa)). The region spanning 357 to 551 (FFNSMLMSSI…TLIMAFSLAV (195 aa)) is the ABC transmembrane type-1 2 domain.

This sequence belongs to the binding-protein-dependent transport system permease family. CysTW subfamily.

The protein resides in the cell inner membrane. Probably part of the binding-protein-dependent transport system y4fNOP. Probably responsible for the translocation of the substrate across the membrane. The polypeptide is Probable ABC transporter permease protein y4fN (Sinorhizobium fredii (strain NBRC 101917 / NGR234)).